The sequence spans 216 residues: GTPase IMAP family member GIMD1 (216 aa).

One can recognise an AIG1-type G domain in the interval 5–216 (KMIINLAVLG…ENHFQVLSFT (212 aa)). Residues 14-22 (GKTQSGKSS), serine 35, and 147-149 (HAE) each bind GTP.

This sequence belongs to the TRAFAC class TrmE-Era-EngA-EngB-Septin-like GTPase superfamily. AIG1/Toc34/Toc159-like paraseptin GTPase family. IAN subfamily.

The chain is GTPase IMAP family member GIMD1 (Gimd1) from Rattus norvegicus (Rat).